The primary structure comprises 207 residues: Transcriptional regulatory protein RcsA (207 aa).

Residues 131–196 (INLPTLSLSR…VIYHVVRLTD (66 aa)) enclose the HTH luxR-type domain. The H-T-H motif DNA-binding region spans 155 to 174 (TIQISDRMNIKAKTVSSHKG).

It belongs to the RcsA family. As to quaternary structure, interacts with RcsB.

Functionally, component of the Rcs signaling system, which controls transcription of numerous genes. Binds, with RcsB, to the RcsAB box to regulate expression of genes. The chain is Transcriptional regulatory protein RcsA from Salmonella typhimurium (strain LT2 / SGSC1412 / ATCC 700720).